Consider the following 241-residue polypeptide: Large ribosomal subunit protein uL3 (241 aa).

2 disordered regions span residues 140–162 (SHRSIGSTGGRQDPGKTFKNKKM) and 217–241 (PLPGKFRENGASAPATEAPAAEETA). Residue glutamine 151 is modified to N5-methylglutamine. The span at 229 to 241 (APATEAPAAEETA) shows a compositional bias: low complexity.

The protein belongs to the universal ribosomal protein uL3 family. In terms of assembly, part of the 50S ribosomal subunit. Forms a cluster with proteins L14 and L19. Methylated by PrmB.

Functionally, one of the primary rRNA binding proteins, it binds directly near the 3'-end of the 23S rRNA, where it nucleates assembly of the 50S subunit. The polypeptide is Large ribosomal subunit protein uL3 (Methylobacterium radiotolerans (strain ATCC 27329 / DSM 1819 / JCM 2831 / NBRC 15690 / NCIMB 10815 / 0-1)).